Consider the following 317-residue polypeptide: CXXC-type zinc finger protein 5 (317 aa).

Positions 1-10 are enriched in gly residues; sequence MSSLGGGSQD. The disordered stretch occupies residues 1–92; it reads MSSLGGGSQD…SFGSSGGGGS (92 aa). 2 stretches are compositionally biased toward low complexity: residues 11–27 and 36–51; these read AGGS…SGSG and STAV…VADD. The segment at 251–292 adopts a CXXC-type zinc-finger fold; it reads GKKKRKRCGMCAPCRRRINCEQCSSCRNRKTGHQICKFRKCE. The Nuclear localization signal motif lies at 252-257; sequence KKKRKR. Residues Cys258, Cys261, Cys264, Cys270, Cys273, Cys276, Cys286, and Cys291 each coordinate Zn(2+).

Interacts with DVL1. Interacts with RBPJ.

The protein resides in the nucleus. Its subcellular location is the cytoplasm. Functionally, may indirectly participate in activation of the NF-kappa-B and MAPK pathways. Acts as a mediator of BMP4-mediated modulation of canonical Wnt signaling activity in neural stem cells. Required for DNA damage-induced ATM phosphorylation, p53 activation and cell cycle arrest. Involved in myelopoiesis. Binds to the oxygen responsive element of COX4I2 and represses its transcription under hypoxia conditions (4% oxygen), as well as normoxia conditions (20% oxygen). May repress COX4I2 transactivation induced by CHCHD2 and RBPJ. Binds preferentially to DNA containing cytidine-phosphate-guanosine (CpG) dinucleotides over CpH (H=A, T, and C), hemimethylated-CpG and hemimethylated-hydroxymethyl-CpG. The protein is CXXC-type zinc finger protein 5 (Cxxc5) of Mus musculus (Mouse).